Reading from the N-terminus, the 371-residue chain is Homeobox protein Nkx-2.1 (371 aa).

The segment at residues 161–220 (RRKRRVLFSQAQVYELERRFKQQKYLSAPEREHLASMIHLTPTQVKIWFQNHRYKMKRQA) is a DNA-binding region (homeobox). Disordered stretches follow at residues 219–294 (QAKD…QHQA) and 310–339 (GAGL…SPAA). Gly residues predominate over residues 233–243 (SGGGGGGGGTG). The span at 244 to 253 (CPQQQQAQQQ) shows a compositional bias: low complexity. S254 carries the post-translational modification Phosphoserine. Over residues 272 to 294 (AGAPAPGAASLQGHAQQQAQHQA) the composition is skewed to low complexity.

Belongs to the NK-2 homeobox family. Interacts with WWTR1. In terms of processing, phosphorylated on serine residues by STK3/MST2. Thyroid and lung.

It localises to the nucleus. In terms of biological role, transcription factor that binds and activates the promoter of thyroid specific genes such as thyroglobulin, thyroperoxidase, and thyrotropin receptor. Crucial in the maintenance of the thyroid differentiation phenotype. May play a role in lung development and surfactant homeostasis. Forms a regulatory loop with GRHL2 that coordinates lung epithelial cell morphogenesis and differentiation. Activates the transcription of GNRHR and plays a role in enhancing the circadian oscillation of its gene expression. Represses the transcription of the circadian transcriptional repressor NR1D1. The protein is Homeobox protein Nkx-2.1 of Homo sapiens (Human).